Here is a 394-residue protein sequence, read N- to C-terminus: Flagellin A (394 aa).

This sequence belongs to the bacterial flagellin family.

The protein resides in the secreted. Its subcellular location is the bacterial flagellum. Functionally, flagellin is the subunit protein which polymerizes to form the filaments of bacterial flagella. Homomer of FlaA is able to form a functional filament. The polypeptide is Flagellin A (flaA) (Rhizobium meliloti (strain 1021) (Ensifer meliloti)).